The following is a 503-amino-acid chain: UDP-N-acetylmuramate--L-alanine ligase (503 aa).

The segment at 1–22 (MIKQTHVSNSSNNSTNSTAAQV) is disordered. A compositionally biased stretch (low complexity) spans 8–18 (SNSSNNSTNST). Residue 135 to 141 (GTHGKTT) coordinates ATP.

This sequence belongs to the MurCDEF family.

It is found in the cytoplasm. The catalysed reaction is UDP-N-acetyl-alpha-D-muramate + L-alanine + ATP = UDP-N-acetyl-alpha-D-muramoyl-L-alanine + ADP + phosphate + H(+). Its pathway is cell wall biogenesis; peptidoglycan biosynthesis. Cell wall formation. The polypeptide is UDP-N-acetylmuramate--L-alanine ligase (Colwellia psychrerythraea (strain 34H / ATCC BAA-681) (Vibrio psychroerythus)).